The sequence spans 395 residues: Membrane glycoprotein spo14 (395 aa).

Residues 1 to 346 are Cytoplasmic-facing; the sequence is MAELHLSFPA…KLEDAGVILR (346 aa). 2 WD repeats span residues 250 to 285 and 290 to 326; these read MIRDLKNAKGVTCFCCDKENGMIIVAGADCSIRFMS and KLSQVYKHSLPVTDMQLSPDSEALVSVSADGLLCLQF. Residues 347–367 traverse the membrane as a helical; Signal-anchor for type II membrane protein segment; sequence LSLMFPFVLAILYFYLQLLFP. Topologically, residues 368–395 are lumenal; it reads DEKLDAIHRFFSFILHIFSKYTIRNYDL.

The protein localises to the endoplasmic reticulum membrane. It is found in the golgi apparatus. The protein resides in the cis-Golgi network membrane. In terms of biological role, required for the formation of transport vesicles from the ER. This function involves the cytoplasmic domain of the protein, which is thought to interact with the small GTP-binding protein sar1. The sequence is that of Membrane glycoprotein spo14 (spo14) from Schizosaccharomyces pombe (strain 972 / ATCC 24843) (Fission yeast).